A 227-amino-acid chain; its full sequence is ATP synthase F(0) complex subunit a (227 aa).

6 helical membrane passes run 13–33, 69–89, 98–118, 132–152, 179–199, and 202–222; these read YLLGIPLILVAMLLPWLLFPA, WALLFASLMVFLITINLLGLL, QLSLNMGFAVPLWLATVIIGM, EGTPIPLIPALIIIETISLFI, VFVLLPMMPAVAILTASVLFL, and LLEVAVAMIQAYVFILLLSLY.

This sequence belongs to the ATPase A chain family. As to quaternary structure, component of the ATP synthase complex composed at least of ATP5F1A/subunit alpha, ATP5F1B/subunit beta, ATP5MC1/subunit c (homooctomer), MT-ATP6/subunit a, MT-ATP8/subunit 8, ATP5ME/subunit e, ATP5MF/subunit f, ATP5MG/subunit g, ATP5MK/subunit k, ATP5MJ/subunit j, ATP5F1C/subunit gamma, ATP5F1D/subunit delta, ATP5F1E/subunit epsilon, ATP5PF/subunit F6, ATP5PB/subunit b, ATP5PD/subunit d, ATP5PO/subunit OSCP. ATP synthase complex consists of a soluble F(1) head domain (subunits alpha(3) and beta(3)) - the catalytic core - and a membrane F(0) domain - the membrane proton channel (subunits c, a, 8, e, f, g, k and j). These two domains are linked by a central stalk (subunits gamma, delta, and epsilon) rotating inside the F1 region and a stationary peripheral stalk (subunits F6, b, d, and OSCP). Interacts with DNAJC30; interaction is direct.

It is found in the mitochondrion inner membrane. It catalyses the reaction H(+)(in) = H(+)(out). Functionally, subunit a, of the mitochondrial membrane ATP synthase complex (F(1)F(0) ATP synthase or Complex V) that produces ATP from ADP in the presence of a proton gradient across the membrane which is generated by electron transport complexes of the respiratory chain. ATP synthase complex consist of a soluble F(1) head domain - the catalytic core - and a membrane F(1) domain - the membrane proton channel. These two domains are linked by a central stalk rotating inside the F(1) region and a stationary peripheral stalk. During catalysis, ATP synthesis in the catalytic domain of F(1) is coupled via a rotary mechanism of the central stalk subunits to proton translocation. With the subunit c (ATP5MC1), forms the proton-conducting channel in the F(0) domain, that contains two crucial half-channels (inlet and outlet) that facilitate proton movement from the mitochondrial intermembrane space (IMS) into the matrix. Protons are taken up via the inlet half-channel and released through the outlet half-channel, following a Grotthuss mechanism. This is ATP synthase F(0) complex subunit a from Danio rerio (Zebrafish).